The chain runs to 344 residues: Sulfate/thiosulfate import ATP-binding protein CysA (344 aa).

Residues 3–233 (ILIDNVSKNF…PESAFVMSFL (231 aa)) form the ABC transporter domain. Position 35 to 42 (35 to 42 (GPSGCGKS)) interacts with ATP.

This sequence belongs to the ABC transporter superfamily. Sulfate/tungstate importer (TC 3.A.1.6) family. The complex is composed of two ATP-binding proteins (CysA), two transmembrane proteins (CysT and CysW) and a solute-binding protein (CysP).

Its subcellular location is the cell inner membrane. It catalyses the reaction sulfate(out) + ATP + H2O = sulfate(in) + ADP + phosphate + H(+). It carries out the reaction thiosulfate(out) + ATP + H2O = thiosulfate(in) + ADP + phosphate + H(+). Functionally, part of the ABC transporter complex CysAWTP involved in sulfate/thiosulfate import. Responsible for energy coupling to the transport system. The chain is Sulfate/thiosulfate import ATP-binding protein CysA from Gloeobacter violaceus (strain ATCC 29082 / PCC 7421).